The chain runs to 330 residues: Olfactory receptor 5P73 (330 aa).

Topologically, residues 1–28 (MAFLEDGNHTTVTEFFLLGLTDDPVLRD) are extracellular. A glycan (N-linked (GlcNAc...) asparagine) is linked at N8. A helical transmembrane segment spans residues 29–49 (ILFIIILCIYLVTVSGNLSTI). Residues 50–57 (LLIRVSSQ) are Cytoplasmic-facing. A helical membrane pass occupies residues 58–78 (LHHPMYFILSHLASVDIGISS). The Extracellular portion of the chain corresponds to 79-102 (SVTPNMLATFLVKQNTISYIGCSI). C100 and C192 are disulfide-bonded. A helical membrane pass occupies residues 103 to 123 (QFTSAAFFGTVECFLLATMAY). The Cytoplasmic portion of the chain corresponds to 124-136 (DRFVAICNPLLYS). Residues 137-157 (TKMSTEACIQLVVGSYIQGFL) traverse the membrane as a helical segment. Residues 158-199 (NASFFTLSFFSLFFCGPNRINDFYCDFAPLLELSCSDVTVAV) lie on the Extracellular side of the membrane. The helical transmembrane segment at 200 to 220 (VITSISAGFITLTTVFVIAIS) threads the bilayer. Over 221–240 (YSCIFITIMKMHSTESRCKA) the chain is Cytoplasmic. A helical membrane pass occupies residues 241-261 (FSTCTSHLTAVILFYGTAIFI). The Extracellular segment spans residues 262 to 274 (YVMPKSSYSTDQN). Residues 275–295 (KVLSIFYTVVIPMLNPLIYSL) traverse the membrane as a helical segment. At 296–330 (RNNEIKEALKRHLGKKVFSYGNLFCKTHYNHNYPV) the chain is on the cytoplasmic side.

The protein belongs to the G-protein coupled receptor 1 family.

It is found in the cell membrane. Potential odorant receptor. The sequence is that of Olfactory receptor 5P73 from Mus musculus (Mouse).